The sequence spans 259 residues: MKEHKARKRFGQNFLQDTRIISDIVNAVRPQADDVVIEIGPGLAAITEPLAKKLNRLHVVEIDRDIVCRLKTLPFADKLVIHEGDVLQFDFNGIAGKKKIVGNLPYNISTPLLFKLAEVADDVVDMHFMLQKEVVDRMVAAPKSNDYGRLGVMLQYFFDMEMLIDVPPESFDPAPKVDSAVVRMIPVKHRIGKADDFEHFAKLVKLAFHQRRKTIRNNLKELAGDDDLQAVGINPQDRAEHIAPEKYVALSNYLAGKAV.

Residues Asn-13, Leu-15, Gly-40, Glu-61, Asp-85, and Asn-103 each contribute to the S-adenosyl-L-methionine site.

Belongs to the class I-like SAM-binding methyltransferase superfamily. rRNA adenine N(6)-methyltransferase family. RsmA subfamily.

It localises to the cytoplasm. It catalyses the reaction adenosine(1518)/adenosine(1519) in 16S rRNA + 4 S-adenosyl-L-methionine = N(6)-dimethyladenosine(1518)/N(6)-dimethyladenosine(1519) in 16S rRNA + 4 S-adenosyl-L-homocysteine + 4 H(+). Its function is as follows. Specifically dimethylates two adjacent adenosines (A1518 and A1519) in the loop of a conserved hairpin near the 3'-end of 16S rRNA in the 30S particle. May play a critical role in biogenesis of 30S subunits. This is Ribosomal RNA small subunit methyltransferase A from Neisseria meningitidis serogroup A / serotype 4A (strain DSM 15465 / Z2491).